The primary structure comprises 297 residues: Heme A synthase (297 aa).

The Cytoplasmic segment spans residues 1 to 6; that stretch reads MHKRLK. The helical transmembrane segment at 7 to 27 threads the bilayer; it reads IYSVITSIGVLIVLLQGALVT. The Extracellular portion of the chain corresponds to 28 to 62; it reads KTGSGEGCGATWPLCFGEVIPTNPAIETIIEYSHR. An intrachain disulfide couples Cys35 to Cys42. Residue Glu58 is part of the active site. His61 lines the heme o pocket. The chain crosses the membrane as a helical span at residues 63 to 83; that stretch reads IVSGLVGAMIIILAIWAWKQL. Over 84-93 the chain is Cytoplasmic; it reads KHMREAKALS. A helical transmembrane segment spans residues 94 to 114; sequence FAAVILIIFQGLLGAGAVVFG. Residues 115-118 are Extracellular-facing; the sequence is QSKA. Residues 119 to 139 traverse the membrane as a helical segment; the sequence is ILALHFGISAMSLAAVVLLTI. His123 lines the heme o pocket. Over 140–156 the chain is Cytoplasmic; it reads LAFEDGREHTMAPKVSR. A helical transmembrane segment spans residues 157 to 177; sequence GFKYYVFFVITYCYAVIYSGA. Topologically, residues 178 to 210 are extracellular; sequence YVKHSEATLACAGFPLCNGQIFPGLYGPVGAHY. Cys188 and Cys194 are oxidised to a cystine. The chain crosses the membrane as a helical span at residues 211–231; sequence FHRVVGTILLLFLLILMIWTL. Residue His212 participates in heme b binding. Over 232–242 the chain is Cytoplasmic; that stretch reads SRYRHYRVLTW. A helical transmembrane segment spans residues 243–263; that stretch reads TAVLSFLLVVGQFISGISIVF. Residues 264 to 271 are Extracellular-facing; that stretch reads TQNALSVG. The chain crosses the membrane as a helical span at residues 272–292; sequence LIHALIISILFSALSYMTMII. Residue His274 coordinates heme b. Residues 293–297 are Cytoplasmic-facing; sequence TRPSH.

It belongs to the COX15/CtaA family. Type 1 subfamily. In terms of assembly, interacts with CtaB. The cofactor is heme b.

The protein localises to the cell membrane. The enzyme catalyses Fe(II)-heme o + 2 A + H2O = Fe(II)-heme a + 2 AH2. Its pathway is porphyrin-containing compound metabolism; heme A biosynthesis; heme A from heme O: step 1/1. In terms of biological role, catalyzes the conversion of heme O to heme A by two successive hydroxylations of the methyl group at C8. The first hydroxylation forms heme I, the second hydroxylation results in an unstable dihydroxymethyl group, which spontaneously dehydrates, resulting in the formyl group of heme A. The polypeptide is Heme A synthase (Alkalihalophilus pseudofirmus (strain ATCC BAA-2126 / JCM 17055 / OF4) (Bacillus pseudofirmus)).